Here is a 134-residue protein sequence, read N- to C-terminus: ATP synthase epsilon chain (134 aa).

The protein belongs to the ATPase epsilon chain family. F-type ATPases have 2 components, CF(1) - the catalytic core - and CF(0) - the membrane proton channel. CF(1) has five subunits: alpha(3), beta(3), gamma(1), delta(1), epsilon(1). CF(0) has three main subunits: a, b and c.

It localises to the cell membrane. In terms of biological role, produces ATP from ADP in the presence of a proton gradient across the membrane. In Carboxydothermus hydrogenoformans (strain ATCC BAA-161 / DSM 6008 / Z-2901), this protein is ATP synthase epsilon chain.